The following is a 367-amino-acid chain: DNA-directed RNA polymerase II subunit GRINL1A (367 aa).

The stretch at 15–40 forms a coiled coil; it reads DLERRSLAELREMLKRQERLLRNEKF. Residues 29–68 form an important for transcription repressor activity region; that stretch reads KRQERLLRNEKFICKLPDKGKKIFDSFAKLKAAIAECEEV. Composition is skewed to polar residues over residues 117–131, 176–185, and 205–225; these read SVDNIKSSQTSQNQG, RVSSQAEDTS, and GEQQSENASTKNLTGLSSGTQ. Disordered regions lie at residues 117-185, 203-225, and 254-281; these read SVDN…EDTS, DQGEQQSENASTKNLTGLSSGTQ, and PFRQNDSSSHCQKSRSPISSEERRRRDK. Residues 226 to 297 are interaction with Pol II; it reads KKPHYMEVLE…TAARLLPLHH (72 aa). Serine 269 is subject to Phosphoserine. The interval 298–313 is important for transcription repressor activity; sequence MPTQLLSIEESLALQK. Residues 300–329 are a coiled coil; that stretch reads TQLLSIEESLALQKQRKQKYEEMQAKLAAQ. Residues 314–339 are interaction with Pol II; sequence QRKQKYEEMQAKLAAQKLAERLNIKM. The tract at residues 335-367 is disordered; sequence LNIKMRSYNPEGESSGRYREVRDEDDDWSSDEF. Residues 357–367 are compositionally biased toward acidic residues; sequence DEDDDWSSDEF.

The protein belongs to the GRINL1 family. As to quaternary structure, component of the Pol II(G) complex, which contains the RNA polymerase II (Pol II) core complex subunits and POLR2M isoform 1. Pol II(G) appears to be an abundant form of Pol II. Post-translationally, dephosphorylated at Ser-269 by the PNUTS-PP1 complex, promoting RNA polymerase II transcription pause-release.

It localises to the nucleus. In terms of biological role, appears to be a stable component of the Pol II(G) complex form of RNA polymerase II (Pol II). Pol II synthesizes mRNA precursors and many functional non-coding RNAs and is the central component of the basal RNA polymerase II transcription machinery. May play a role in the Mediator complex-dependent regulation of transcription activation. Acts as a negative regulator of transcriptional activation; this repression is relieved by the Mediator complex, which restores Pol II(G) activator-dependent transcription to a level equivalent to that of Pol II. The chain is DNA-directed RNA polymerase II subunit GRINL1A (POLR2M) from Pongo abelii (Sumatran orangutan).